The following is a 1549-amino-acid chain: ATP-binding cassette sub-family C member 9 (1549 aa).

Over 1-30 (MSLSFCGNNISSYNINDGVLQNSCFVDALN) the chain is Extracellular. Asn-9 is a glycosylation site (N-linked (GlcNAc...) asparagine). Residues 31–51 (LVPHVFLLFITFPILFIGWGS) traverse the membrane as a helical segment. The Cytoplasmic portion of the chain corresponds to 52–72 (QSSKVQIHHNTWLHFPGHNLR). A helical membrane pass occupies residues 73 to 93 (WILTFALLFVHVCEIAEGIVS). Residues 94–101 (DSRRESRH) lie on the Extracellular side of the membrane. Residues 102–122 (LHLFMPAVMGFVATTTSIVYY) form a helical membrane-spanning segment. The Cytoplasmic portion of the chain corresponds to 123 to 132 (HNIETSNFPK). Residues 133-153 (LLLALFLYWVMAFITKTIKLV) form a helical membrane-spanning segment. Residues 154–167 (KYCQSGLDISNLRF) are Extracellular-facing. The chain crosses the membrane as a helical span at residues 168-188 (CITGMMVILNGLLMAVEINVI). Residues 189–301 (RVRRYVFFMN…AFGRPILLSS (113 aa)) are Cytoplasmic-facing. One can recognise an ABC transmembrane type-1 1 domain in the interval 297–597 (ILLSSTFRYL…LSTVVRFAVK (301 aa)). Residues 302 to 322 (TFRYLADLLGFAGPLCISGIV) form a helical membrane-spanning segment. Topologically, residues 323-350 (QRVNETQNGTNNTTGISETLSSKEFLEN) are extracellular. Residues Asn-326, Asn-330, Asn-333, and Asn-334 are each glycosylated (N-linked (GlcNAc...) asparagine). The chain crosses the membrane as a helical span at residues 351–371 (AYVLAVLLFLALILQRTFLQA). At 372-423 (SYYVTIETGINLRGALLAMIYNKILRLSTSNLSMGEMTLGQINNLVAIETNQ) the chain is on the cytoplasmic side. The helical transmembrane segment at 424-444 (LMWFLFLCPNLWAMPVQIIMG) threads the bilayer. The Extracellular portion of the chain corresponds to 445–455 (VILLYNLLGSS). Residues 456–476 (ALVGAAVIVLLAPIQYFIATK) traverse the membrane as a helical segment. Residues 477–531 (LAEAQKSTLDYSTERLKKTNEILKGIKLLKLYAWEHIFCKSVEETRMKELSSLKT) are Cytoplasmic-facing. A helical membrane pass occupies residues 532 to 552 (FALYTSLSIFMNAAIPIAAVL). Residues 553–571 (ATFVTHAYASGNNLKPAEA) lie on the Extracellular side of the membrane. Residues 572 to 592 (FASLSLFHILVTPLFLLSTVV) form a helical membrane-spanning segment. The Cytoplasmic portion of the chain corresponds to 593-990 (RFAVKAIISV…TCWRYLTSGG (398 aa)). One can recognise an ABC transporter 1 domain in the interval 672-912 (IKVTNGYFSW…DVELYEHWKT (241 aa)). 705 to 712 (GQVGCGKS) lines the ATP pocket. The disordered stretch occupies residues 944 to 967 (REAKAQMEDEDEEEEEEEDEDDNM). Residues 951 to 966 (EDEDEEEEEEEDEDDN) show a composition bias toward acidic residues. A helical membrane pass occupies residues 991–1011 (FFLLILMIFSKLLKHSVIVAI). The ABC transmembrane type-1 2 domain occupies 994–1274 (LILMIFSKLL…VVRNLADLEV (281 aa)). Residues 1012 to 1034 (DYWLATWTSEYSINNTGKADQTY) are Extracellular-facing. The helical transmembrane segment at 1035–1055 (YVAGFSILCGAGIFLCLVTSL) threads the bilayer. The Cytoplasmic portion of the chain corresponds to 1056-1127 (TVEWMGLTAA…TLLCLSAIGM (72 aa)). A helical membrane pass occupies residues 1128–1148 (ISYATPVFLVALLPLGVAFYF). Residues 1149-1245 (IQKYFRVASK…IASISGSSNS (97 aa)) lie on the Extracellular side of the membrane. The helical transmembrane segment at 1246–1266 (GLVGLGLLYALTITNYLNWVV) threads the bilayer. The Cytoplasmic portion of the chain corresponds to 1267 to 1549 (RNLADLEVQM…LFSTLVMTNK (283 aa)). The ABC transporter 2 domain maps to 1312-1546 (IKIHDLCVRY…KNGLFSTLVM (235 aa)). 1346–1353 (GRTGSGKS) lines the ATP pocket.

It belongs to the ABC transporter superfamily. ABCC family. Conjugate transporter (TC 3.A.1.208) subfamily. Interacts with KCNJ11. Interacts with KCNJ8.

It localises to the membrane. Its function is as follows. Subunit of ATP-sensitive potassium channels (KATP). Can form cardiac and smooth muscle-type KATP channels with KCNJ11. KCNJ11 forms the channel pore while ABCC9 is required for activation and regulation. Can form a sulfonylurea-sensitive but ATP-insensitive potassium channel with KCNJ8. The sequence is that of ATP-binding cassette sub-family C member 9 (ABCC9) from Homo sapiens (Human).